The following is a 499-amino-acid chain: MTVATEDPADEAAALPGHPQDTYDPEADHECCERVVINISGLRFETQLKTLAQFPETLLGDPKKRMRYFDPLRNEYFFDRNRPSFDAILYYYQSGGRLRRPVNVPLDIFSEEIRFYELGEEAMEMFREDEGYIKEEERPLPENEFQRQVWLLFEYPESSGPARIIAIVSVMVILISIVSFCLETLPIFRDENEDMHGSGMTFHTYSNSTAGYQQSTSFTDPFFIVETLCIIWFSFEFLVRFFACPSKAGFFTNIMNIIDIVAIIPYFITLGTELAEKPEDAQQGQQAMSLAILRVIRLVRVFRIFKLSRHSKGLQILGQTLKASMRELGLLIFFLFIGVILFSSAVYFAEADERDSQFPSIPDAFWWAVVSMTTVGYGDMVPTTIGGKIVGSLCAIAGVLTIALPVPVIVSNFNYFYHRETEGEEQAQYLQVTSCPKIPSSPDLKKSRSASTISKSDYMEIQEGVNNSNEDFREENLKTANCTLANTNYVNITKMLTDV.

The segment at 1-26 (MTVATEDPADEAAALPGHPQDTYDPE) is disordered. Residues 1–125 (MTVATEDPAD…YELGEEAMEM (125 aa)) are tetramerization domain. The Cytoplasmic segment spans residues 1–160 (MTVATEDPAD…LLFEYPESSG (160 aa)). A helical membrane pass occupies residues 161–182 (PARIIAIVSVMVILISIVSFCL). Topologically, residues 183-221 (ETLPIFRDENEDMHGSGMTFHTYSNSTAGYQQSTSFTDP) are extracellular. An N-linked (GlcNAc...) asparagine glycan is attached at Asn207. The helical transmembrane segment at 222-243 (FFIVETLCIIWFSFEFLVRFFA) threads the bilayer. Cys244 carries the S-palmitoyl cysteine lipid modification. Topologically, residues 244 to 254 (CPSKAGFFTNI) are cytoplasmic. A helical membrane pass occupies residues 255–275 (MNIIDIVAIIPYFITLGTELA). Topologically, residues 276–289 (EKPEDAQQGQQAMS) are extracellular. Residues 290–310 (LAILRVIRLVRVFRIFKLSRH) traverse the membrane as a helical; Voltage-sensor segment. Residues 311 to 325 (SKGLQILGQTLKASM) are Cytoplasmic-facing. Residues 312-325 (KGLQILGQTLKASM) are S4-S5 linker. A helical transmembrane segment spans residues 326-347 (RELGLLIFFLFIGVILFSSAVY). Topologically, residues 348–361 (FAEADERDSQFPSI) are extracellular. The helical intramembrane region spans 362–373 (PDAFWWAVVSMT). The Selectivity filter motif lies at 374–379 (TVGYGD). An intramembrane segment occupies 374 to 381 (TVGYGDMV). Residues 382 to 388 (PTTIGGK) lie on the Extracellular side of the membrane. The helical transmembrane segment at 389 to 417 (IVGSLCAIAGVLTIALPVPVIVSNFNYFY) threads the bilayer. The Cytoplasmic segment spans residues 418-499 (HRETEGEEQA…VNITKMLTDV (82 aa)). Tyr429 bears the Phosphotyrosine mark. Ser434, Ser440, Ser441, and Ser449 each carry phosphoserine. Tyr458 carries the post-translational modification Phosphotyrosine. The residue at position 468 (Ser468) is a Phosphoserine. The PDZ-binding signature appears at 497–499 (TDV).

This sequence belongs to the potassium channel family. A (Shaker) (TC 1.A.1.2) subfamily. Kv1.2/KCNA2 sub-subfamily. Homotetramer and heterotetramer with other channel-forming alpha subunits, such as KCNA1, KCNA4, KCNA5, KCNA6 and KCNA7. Channel activity is regulated by interaction with the beta subunits, including KCNAB1 and KCNAB2. Identified in a complex with KCNA1 and KCNAB2. Identified in a complex with KCNA4 and FYN. Identified in a complex with KCNA5 and KCNAB1. Interacts with the beta subunit KCNAB1. Interacts with PTK2B. Interacts (via C-terminus) with CTTN. Interacts (via N-terminal cytoplasmic domain) with RHOA (GTP-bound form); this regulates channel activity by reducing location at the cell surface in response to CHRM1 activation. Interacts with DRD2. Interacts with SIGMAR1; cocaine consumption leads to increased interaction. Interacts with ADAM22. Interacts with CNTNAP2. Interacts (via C-terminus) with the PDZ domains of DLG1, DLG2 and DLG4. Interacts with ADAM11. Interacts with LYNX1. In terms of processing, phosphorylated on tyrosine residues; phosphorylation increases in response to ischemia. Phosphorylated on tyrosine residues by activated PTK2B/PYK2. Phosphorylation on tyrosine residues suppresses ion channel activity. Phosphorylated on tyrosine residues in response to CHRM1 activation; this abolishes interaction with CTTN. This is probably due to endocytosis of the phosphorylated channel subunits. Phosphorylated on serine residues in response to increased cAMP levels; phosphorylation is apparently not catalyzed by PKA. N-glycosylated, with complex, sialylated N-glycans. In terms of tissue distribution, detected in portal vein myocytes (at protein level). Detected in portal vein. Brain, liver and kidney.

The protein resides in the cell membrane. It localises to the membrane. Its subcellular location is the cell projection. It is found in the axon. The protein localises to the synapse. The protein resides in the presynaptic cell membrane. It localises to the synaptosome. Its subcellular location is the endoplasmic reticulum membrane. It is found in the dendrite. The protein localises to the lamellipodium membrane. The protein resides in the cell junction. It localises to the paranodal septate junction. It carries out the reaction K(+)(in) = K(+)(out). Inhibited by 4-aminopyridine (4-AP). Inhibited by dendrotoxin (DTX) and charybdotoxin (CTX), but not by tetraethylammonium (TEA). Inhibited by tityustoxin-K alpha (TsTX-Kalpha), a toxin that is highly specific for KCNA2. Inhibited by maurotoxin. Inhibited by kappaM conotoxins kappaM-RIIIJ and kappaM-RIIIK. In terms of biological role, voltage-gated potassium channel that mediates transmembrane potassium transport in excitable membranes, primarily in the brain and the central nervous system, but also in the cardiovascular system. Prevents aberrant action potential firing and regulates neuronal output. Forms tetrameric potassium-selective channels through which potassium ions pass in accordance with their electrochemical gradient. The channel alternates between opened and closed conformations in response to the voltage difference across the membrane. Can form functional homotetrameric channels and heterotetrameric channels that contain variable proportions of KCNA1, KCNA2, KCNA4, KCNA5, KCNA6, KCNA7, and possibly other family members as well; channel properties depend on the type of alpha subunits that are part of the channel. Channel properties are modulated by cytoplasmic beta subunits that regulate the subcellular location of the alpha subunits and promote rapid inactivation of delayed rectifier potassium channels. In vivo, membranes probably contain a mixture of heteromeric potassium channel complexes, making it difficult to assign currents observed in intact tissues to any particular potassium channel family member. Homotetrameric KCNA2 forms a delayed-rectifier potassium channel that opens in response to membrane depolarization, followed by slow spontaneous channel closure. In contrast, a heteromultimer formed by KCNA2 and KCNA4 shows rapid inactivation. Regulates neuronal excitability and plays a role as pacemaker in the regulation of neuronal action potentials. KCNA2-containing channels play a presynaptic role and prevent hyperexcitability and aberrant action potential firing. Response to toxins that are selective for KCNA2-containing potassium channels suggests that in Purkinje cells, dendritic subthreshold KCNA2-containing potassium channels prevent random spontaneous calcium spikes, suppressing dendritic hyperexcitability without hindering the generation of somatic action potentials, and thereby play an important role in motor coordination. Plays a role in the induction of long-term potentiation of neuron excitability in the CA3 layer of the hippocampus. May function as down-stream effector for G protein-coupled receptors and inhibit GABAergic inputs to basolateral amygdala neurons. May contribute to the regulation of neurotransmitter release, such as gamma-aminobutyric acid (GABA). Contributes to the regulation of the axonal release of the neurotransmitter dopamine. Reduced KCNA2 expression plays a role in the perception of neuropathic pain after peripheral nerve injury, but not acute pain. Plays a role in the regulation of the time spent in non-rapid eye movement (NREM) sleep. The sequence is that of Potassium voltage-gated channel subfamily A member 2 (KCNA2) from Oryctolagus cuniculus (Rabbit).